Reading from the N-terminus, the 433-residue chain is Xylose isomerase (433 aa).

Active-site residues include histidine 97 and aspartate 100. Mg(2+) contacts are provided by glutamate 228, glutamate 264, histidine 267, aspartate 292, aspartate 303, aspartate 305, and aspartate 334.

It belongs to the xylose isomerase family. As to quaternary structure, homotetramer. It depends on Mg(2+) as a cofactor.

Its subcellular location is the cytoplasm. The catalysed reaction is alpha-D-xylose = alpha-D-xylulofuranose. The sequence is that of Xylose isomerase from Fervidobacterium gondwanense.